Reading from the N-terminus, the 314-residue chain is Lipoyl synthase (314 aa).

The [4Fe-4S] cluster site is built by Cys-67, Cys-72, Cys-78, Cys-93, Cys-97, Cys-100, and Ser-306. The Radical SAM core domain occupies 79–295 (FNRGTATFMI…KNYALSIGFK (217 aa)).

The protein belongs to the radical SAM superfamily. Lipoyl synthase family. [4Fe-4S] cluster is required as a cofactor.

Its subcellular location is the cytoplasm. It carries out the reaction [[Fe-S] cluster scaffold protein carrying a second [4Fe-4S](2+) cluster] + N(6)-octanoyl-L-lysyl-[protein] + 2 oxidized [2Fe-2S]-[ferredoxin] + 2 S-adenosyl-L-methionine + 4 H(+) = [[Fe-S] cluster scaffold protein] + N(6)-[(R)-dihydrolipoyl]-L-lysyl-[protein] + 4 Fe(3+) + 2 hydrogen sulfide + 2 5'-deoxyadenosine + 2 L-methionine + 2 reduced [2Fe-2S]-[ferredoxin]. It functions in the pathway protein modification; protein lipoylation via endogenous pathway; protein N(6)-(lipoyl)lysine from octanoyl-[acyl-carrier-protein]: step 2/2. In terms of biological role, catalyzes the radical-mediated insertion of two sulfur atoms into the C-6 and C-8 positions of the octanoyl moiety bound to the lipoyl domains of lipoate-dependent enzymes, thereby converting the octanoylated domains into lipoylated derivatives. The chain is Lipoyl synthase from Buchnera aphidicola subsp. Baizongia pistaciae (strain Bp).